The primary structure comprises 174 residues: Gamma-crystallin D (174 aa).

Beta/gamma crystallin 'Greek key' domains follow at residues 2-40 (GKIT…RVDS) and 41-83 (GCWM…RLIP). A connecting peptide region spans residues 84–87 (HAGS). 2 consecutive Beta/gamma crystallin 'Greek key' domains span residues 88-128 (HRIR…NVLE) and 129-171 (GCWV…RRVM).

The protein belongs to the beta/gamma-crystallin family. In terms of tissue distribution, detected in the superior olivary complex and fibers of the ventral aoustic stria of the auditory hindbrain.

Functionally, crystallins are the dominant structural components of the vertebrate eye lens. This is Gamma-crystallin D (Crygd) from Rattus norvegicus (Rat).